The primary structure comprises 96 residues: UPF0235 protein Pfl01_5322 (96 aa).

This sequence belongs to the UPF0235 family.

This Pseudomonas fluorescens (strain Pf0-1) protein is UPF0235 protein Pfl01_5322.